A 1044-amino-acid chain; its full sequence is Integrin alpha-V (1044 aa).

The N-terminal stretch at methionine 1 to alanine 30 is a signal peptide. Over phenylalanine 31–valine 988 the chain is Extracellular. 7 FG-GAP repeats span residues asparagine 32–glutamine 98, aspartate 109–alanine 170, arginine 173–tyrosine 225, glutamine 237–methionine 291, serine 292–glutamine 357, threonine 358–serine 415, and glutamine 419–serine 482. The N-linked (GlcNAc...) asparagine glycan is linked to asparagine 74. 3 disulfide bridges follow: cysteine 89–cysteine 97, cysteine 138–cysteine 158, and cysteine 172–cysteine 185. The Ca(2+) site is built by aspartate 260, asparagine 262, aspartate 264, isoleucine 266, and aspartate 268. N-linked (GlcNAc...) asparagine glycans are attached at residues asparagine 290 and asparagine 296. Ca(2+) is bound by residues aspartate 314, asparagine 316, aspartate 318, tyrosine 320, aspartate 322, aspartate 379, aspartate 381, aspartate 383, phenylalanine 385, aspartate 387, aspartate 443, aspartate 445, asparagine 447, tyrosine 449, and aspartate 451. Disulfide bonds link cysteine 491–cysteine 502 and cysteine 508–cysteine 565. Asparagine 615 carries N-linked (GlcNAc...) asparagine glycosylation. 2 disulfides stabilise this stretch: cysteine 626–cysteine 632 and cysteine 698–cysteine 711. Residues asparagine 704, asparagine 835, asparagine 851, and asparagine 869 are each glycosylated (N-linked (GlcNAc...) asparagine). Disulfide bonds link cysteine 852-cysteine 910 and cysteine 900-cysteine 905. 3 N-linked (GlcNAc...) asparagine glycosylation sites follow: asparagine 941, asparagine 969, and asparagine 976. The helical transmembrane segment at proline 989 to tyrosine 1012 threads the bilayer. Residues arginine 1013–threonine 1044 are Cytoplasmic-facing. The GFFKR motif signature appears at glycine 1015–arginine 1019. Residues proline 1023–glycine 1038 show a composition bias toward basic and acidic residues. Residues proline 1023–threonine 1044 are disordered.

This sequence belongs to the integrin alpha chain family. Heterodimer of an alpha and a beta subunit. The alpha subunit is composed of a heavy and a light chain linked by a disulfide bond. Alpha-V (ITGAV) associates with either beta-1 (ITGB1), beta-3 (ITGB3), beta-5 (ITGB5), beta-6 (ITGB6) or beta-8 (ITGB8). Interacts with RAB25. Interacts with CIB1. Integrins ITGAV:ITGB3 and ITGAV:ITGB5 interact with FBLN5 (via N-terminus). ITGAV:ITGB3 and ITGAV:ITGB5 interact with CCN3. ITGAV:ITGB3 interacts with ADGRA2. ITGAV:ITGB3 interacts with FGF2; it is likely that FGF2 can simultaneously bind ITGAV:ITGB3 and FGF receptors. ITGAV:ITGB3 interacts with SELP (via C-type lectin domain); the interaction mediates cell-cell interaction and adhesion. ITGAV:ITGB3 is found in a ternary complex with CX3CR1 and CX3CL1. ITGAV:ITGB3 is found in a ternary complex with NRG1 and ERBB3. ITGAV:ITGB3 is found in a ternary complex with FGF1 and FGFR1. ITGAV:ITGB3 is found in a ternary complex with IGF1 and IGF1R. ITGAV:ITGB3 interacts with IGF2. ITGAV:ITGB3 and ITGAV:ITGB6 interact with FBN1. ITGAV:ITGB3 interacts with CD9, CD81 and CD151 (via second extracellular domain). ITGAV:ITGB6 interacts with TGFB1. ITGAV:ITGB3 interacts with PTN. Forms a complex with PTPRZ1 and PTN that stimulates endothelial cell migration through ITGB3 'Tyr-773' phosphorylation. Interacts with TM4SF19.

Its subcellular location is the cell membrane. It is found in the cell junction. The protein localises to the focal adhesion. Functionally, the alpha-V (ITGAV) integrins are receptors for vitronectin, cytotactin, fibronectin, fibrinogen, laminin, matrix metalloproteinase-2, osteopontin, osteomodulin, prothrombin, thrombospondin, TGFB1 and vWF. They recognize the sequence R-G-D in a wide array of ligands. Alpha-V integrins may play a role in embryo implantation, angiogenesis and wound healing. ITGAV:ITGB3 binds to fractalkine (CX3CL1) and may act as its coreceptor in CX3CR1-dependent fractalkine signaling. ITGAV:ITGB3 binds to NRG1 (via EGF domain) and this binding is essential for NRG1-ERBB signaling. ITGAV:ITGB3 binds to FGF1 and this binding is essential for FGF1 signaling. ITGAV:ITGB3 binds to FGF2 and this binding is essential for FGF2 signaling. ITGAV:ITGB3 binds to IGF1 and this binding is essential for IGF1 signaling. ITGAV:ITGB3 binds to IGF2 and this binding is essential for IGF2 signaling. ITGAV:ITGB3 binds to IL1B and this binding is essential for IL1B signaling. ITGAV:ITGB3 binds to PLA2G2A via a site (site 2) which is distinct from the classical ligand-binding site (site 1) and this induces integrin conformational changes and enhanced ligand binding to site 1. ITGAV:ITGB3 and ITGAV:ITGB6 act as a receptor for fibrillin-1 (FBN1) and mediate R-G-D-dependent cell adhesion to FBN1. Integrin alpha-V/beta-6 or alpha-V/beta-8 (ITGAV:ITGB6 or ITGAV:ITGB8) mediates R-G-D-dependent release of transforming growth factor beta-1 (TGF-beta-1) from regulatory Latency-associated peptide (LAP), thereby playing a key role in TGF-beta-1 activation. ITGAV:ITGB3 acts as a receptor for CD40LG. ITGAV:ITGB3 binds to the Lilrb4a/Gp49b receptor and enhances the Lilrb4a-mediated inhibition of mast cell activation. ITGAV:ITGB3 also suppresses marginal zone B cell antibody production through its interaction with Lilrb4a. ITGAV:ITGB3 acts as a receptor for IBSP and promotes cell adhesion and migration to IBSP. The polypeptide is Integrin alpha-V (Itgav) (Mus musculus (Mouse)).